The following is a 130-amino-acid chain: Small ribosomal subunit protein uS9 (130 aa).

The protein belongs to the universal ribosomal protein uS9 family.

The polypeptide is Small ribosomal subunit protein uS9 (Halalkalibacterium halodurans (strain ATCC BAA-125 / DSM 18197 / FERM 7344 / JCM 9153 / C-125) (Bacillus halodurans)).